Consider the following 396-residue polypeptide: Elongation factor Tu 1 (396 aa).

Residues 10 to 206 (KPHCNIGTIG…TVDDYIPQPD (197 aa)) enclose the tr-type G domain. Residues 19-26 (GHVDHGKT) form a G1 region. Residue 19-26 (GHVDHGKT) participates in GTP binding. Threonine 26 provides a ligand contact to Mg(2+). The G2 stretch occupies residues 60-64 (GITIN). The tract at residues 81–84 (DCPG) is G3. GTP-binding positions include 81 to 85 (DCPGH) and 136 to 139 (NKVD). Residues 136-139 (NKVD) form a G4 region. The interval 174–176 (SAK) is G5.

Belongs to the TRAFAC class translation factor GTPase superfamily. Classic translation factor GTPase family. EF-Tu/EF-1A subfamily. As to quaternary structure, monomer.

It localises to the cytoplasm. The enzyme catalyses GTP + H2O = GDP + phosphate + H(+). GTP hydrolase that promotes the GTP-dependent binding of aminoacyl-tRNA to the A-site of ribosomes during protein biosynthesis. The chain is Elongation factor Tu 1 from Caulobacter sp. (strain K31).